The following is a 420-amino-acid chain: Polyketide biosynthesis 3-hydroxy-3-methylglutaryl-ACP synthase PksG (420 aa).

Glu82 (proton donor/acceptor) is an active-site residue. Residue Cys114 is the Acyl-thioester intermediate of the active site. Catalysis depends on His250, which acts as the Proton donor/acceptor.

The protein belongs to the thiolase-like superfamily. HMG-CoA synthase family.

The protein localises to the cytoplasm. It catalyses the reaction 3-oxobutanoyl-[ACP] + acetyl-[ACP] + H2O = (3S)-hydroxy-3-methylglutaryl-[ACP] + holo-[ACP] + H(+). It participates in antibiotic biosynthesis; bacillaene biosynthesis. Functionally, involved in some intermediate steps for the synthesis of the antibiotic polyketide bacillaene which is involved in secondary metabolism. It catalyzes the aldol condensation between the acetyl group attached to the acyl-carrier-protein AcpK (Ac-AcpK) and a beta-ketothioester polyketide intermediate linked to one of the consecutive thiolation domains of PksL. This is Polyketide biosynthesis 3-hydroxy-3-methylglutaryl-ACP synthase PksG (pksG) from Bacillus subtilis (strain 168).